The primary structure comprises 233 residues: Orotidine 5'-phosphate decarboxylase (233 aa).

Substrate-binding positions include Asp11, Lys33, 60 to 69 (DLKFHDIPNT), Thr120, Arg181, Gln190, Gly210, and Arg211. The active-site Proton donor is the Lys62.

The protein belongs to the OMP decarboxylase family. Type 1 subfamily. In terms of assembly, homodimer.

It catalyses the reaction orotidine 5'-phosphate + H(+) = UMP + CO2. It functions in the pathway pyrimidine metabolism; UMP biosynthesis via de novo pathway; UMP from orotate: step 2/2. Catalyzes the decarboxylation of orotidine 5'-monophosphate (OMP) to uridine 5'-monophosphate (UMP). The protein is Orotidine 5'-phosphate decarboxylase of Vibrio parahaemolyticus serotype O3:K6 (strain RIMD 2210633).